The primary structure comprises 134 residues: Arsenate reductase (134 aa).

Residues cysteine 11, cysteine 83, and cysteine 90 each act as nucleophile in the active site. 2 disulfides stabilise this stretch: cysteine 11-cysteine 83 and cysteine 83-cysteine 90.

The protein belongs to the low molecular weight phosphotyrosine protein phosphatase family. Thioredoxin-coupled ArsC subfamily.

It is found in the cytoplasm. It catalyses the reaction arsenate + [thioredoxin]-dithiol + H(+) = arsenite + [thioredoxin]-disulfide + H2O. Its function is as follows. Catalyzes the reduction of arsenate [As(V)] to arsenite [As(III)]. The polypeptide is Arsenate reductase (Bacillus cereus (strain Q1)).